Here is a 989-residue protein sequence, read N- to C-terminus: MKSYISLFFILCVIFNKNVIKCTGESQTGNTGGGQAGNTVGDQAGSTGGSPQGSTGASQPGSSEPSNPVSSGHSVSTVSVSQTSTSSEKQDTIQVKSALLKDYMGLKVTGPCNENFIMFLVPHIYIDVDTEDTNIELRTTLKETNNAISFESNSGSLEKKKYVKLPSNGTTGEQGSSTGTVRGDTEPISDSSSSSSSSSSSSSSSSSSSSSSSSSSSSSSSSSSSESLPANGPDSPTVKPPRNLQNICETGKNFKLVVYIKENTLIIKWKVYGETKDTTENNKVDVRKYLINEKETPFTSILIHAYKEHNGTNLIESKNYALGSDIPEKCDTLASNCFLSGNFNIEKCFQCALLVEKENKNDVCYKYLSEDIVSNFKEIKAETEDDDEDDYTEYKLTESIDNILVKMFKTNENNDKSELIKLEEVDDSLKLELMNYCSLLKDVDTTGTLDNYGMGNEMDIFNNLKRLLIYHSEENINTLKNKFRNAAVCLKNVDDWIVNKRGLVLPELNYDLEYFNEHLYNDKNSPEDKDNKGKGVVHVDTTLEKEDTLSYDNSDNMFCNKEYCNRLKDENNCISNLQVEDQGNCDTSWIFASKYHLETIRCMKGYEPTKISALYVANCYKGEHKDRCDEGSSPMEFLQIIEDYGFLPAESNYPYNYVKVGEQCPKVEDHWMNLWDNGKILHNKNEPNSLDGKGYTAYESERFHDNMDAFVKIIKTEVMNKGSVIAYIKAENVMGYEFSGKKVQNLCGDDTADHAVNIVGYGNYVNSEGEKKSYWIVRNSWGPYWGDEGYFKVDMYGPTHCHFNFIHSVVIFNVDLPMNNKTTKKESKIYDYYLKASPEFYHNLYFKNFNVGKKNLFSEKEDNENNKKLGNNYIIFGQDTAGSGQSGKESNTALESAGTSNEVSERVHVYHILKHIKDGKIRMGMRKYIDTQDVNKKHSCTRSYAFNPENYEKCVNLCNVNWKTCEEKTSPGLCLSKLDTNNECYFCYV.

The N-terminal stretch at 1–16 is a signal peptide; it reads MKSYISLFFILCVIFN. Disordered regions lie at residues 26 to 91 and 165 to 245; these read SQTG…EKQD and LPSN…RNLQ. 3 stretches are compositionally biased toward low complexity: residues 52-87, 167-180, and 191-225; these read QGSTGASQPGSSEPSNPVSSGHSVSTVSVSQTSTSS, SNGTTGEQGSSTGT, and SSSSSSSSSSSSSSSSSSSSSSSSSSSSSSSSSSS. At S167 the chain carries Phosphoserine. N168 is a glycosylation site (N-linked (GlcNAc...) asparagine). The interval 208–245 is interaction with PTKL; it reads SSSSSSSSSSSSSSSSSSESLPANGPDSPTVKPPRNLQ. The N-linked (GlcNAc...) asparagine glycan is linked to N310. Positions 365–382 are interaction with host VTN; that stretch reads YKYLSEDIVSNFKEIKAE. Cysteines 437 and 489 form a disulfide. T541 is subject to Phosphothreonine. 5 cysteine pairs are disulfide-bonded: C559-C564, C573-C602, C585-C628, C619-C664, and C747-C801. The segment at 571–989 is thiol-protease-like; the sequence is NNCISNLQVE…TNNECYFCYV (419 aa). Active-site residues include H754 and N779. N-linked (GlcNAc...) asparagine glycosylation is present at N820. The propeptide at 835-878 is inhibition peptide; sequence KASPEFYHNLYFKNFNVGKKNLFSEKEDNENNKKLGNNYIIFGQ. At S858 the chain carries Phosphoserine.

This sequence belongs to the peptidase C1 family. As to quaternary structure, may interact (via C-terminus) with PTKL (via SAM domain). In terms of assembly, interacts (via C-terminus) with human VTN (via hemopexin repeat 2); may form heterotetramers of two VTN and SERA5 P47 heterodimers; the interaction may protect merozoites from phagocytosis by host monocytes; VTN glycosylation appears to be dispensable for the interaction. Monomer. Interacts with kinase CPK1/CDPK1 at the schizont stage. Post-translationally, phosphorylation by CPK1/CDPK1 increases SERA5 protease activity towards a synthetic peptide in vitro. Just prior to merozoite egress from host erythrocytes, proteolytically cleaved into multiple fragments. Cleaved by SUB1 into p47 and p73, p73 is further cleaved by SUB1 into p56 and p18 and p56 is further processed into p50 by an unidentified protease. p47 remains covalently associated with p18 via disulfide bond. p47 can be processed into p25n and p25c by SUB1. p25c and p25n remain associated with p18. Proteolytic processing is essential for merozoite egress from host erythrocytes. The cleavage of the propeptide to produce p50 is necessary for protease activity and to promote merozoite egress.

It is found in the parasitophorous vacuole. The protein resides in the secreted. Its subcellular location is the cell membrane. Its function is as follows. Plays an essential role during the asexual blood stage development by controlling the kinetics of merozoite egress from host erythrocytes. Specifically, prevents premature rupture of the parasitophorous vacuole and host erythrocyte membranes. Functionally, may prevent merozoite phagocytosis by host monocytes via interaction with host VTN at the merozoite surface. Plays a role in parasite growth. In terms of biological role, protease activity is controversial. The chain is Serine-repeat antigen protein 5 from Plasmodium falciparum (isolate CDC / Honduras).